Here is a 614-residue protein sequence, read N- to C-terminus: UvrABC system protein C (614 aa).

One can recognise a GIY-YIG domain in the interval 19-97 (SLPGCYLWKN…IKKYNPKFNV (79 aa)). The UVR domain occupies 208-243 (ERLVADLKKAMMDASSKMEYERAGFLKQRIEKINQL).

This sequence belongs to the UvrC family. As to quaternary structure, interacts with UvrB in an incision complex.

It is found in the cytoplasm. Functionally, the UvrABC repair system catalyzes the recognition and processing of DNA lesions. UvrC both incises the 5' and 3' sides of the lesion. The N-terminal half is responsible for the 3' incision and the C-terminal half is responsible for the 5' incision. This Leptospira biflexa serovar Patoc (strain Patoc 1 / Ames) protein is UvrABC system protein C.